The sequence spans 395 residues: Acetate kinase (395 aa).

A Mg(2+)-binding site is contributed by N7. Position 14 (K14) interacts with ATP. Position 92 (R92) interacts with substrate. D149 (proton donor/acceptor) is an active-site residue. ATP is bound by residues 207 to 211 (HLGNG), 282 to 284 (DMR), and 329 to 333 (GIGEN). E382 contributes to the Mg(2+) binding site.

Belongs to the acetokinase family. As to quaternary structure, homodimer. Requires Mg(2+) as cofactor. It depends on Mn(2+) as a cofactor.

The protein localises to the cytoplasm. It carries out the reaction acetate + ATP = acetyl phosphate + ADP. Its pathway is metabolic intermediate biosynthesis; acetyl-CoA biosynthesis; acetyl-CoA from acetate: step 1/2. In terms of biological role, catalyzes the formation of acetyl phosphate from acetate and ATP. Can also catalyze the reverse reaction. The protein is Acetate kinase of Brachyspira hyodysenteriae (strain ATCC 49526 / WA1).